We begin with the raw amino-acid sequence, 481 residues long: RAC-beta serine/threonine-protein kinase (481 aa).

Met1 is modified (N-acetylmethionine). A PH domain is found at Ser5–Asn108. Phosphoserine is present on Ser34. Cys60 and Cys77 form a disulfide bridge. A Phosphoserine modification is found at Ser126. Residues Ser128 and Ser131 are each glycosylated (O-linked (GlcNAc) serine). In terms of domain architecture, Protein kinase spans Phe152–Phe409. Residues Leu158–Val166 and Lys181 contribute to the ATP site. Residue Asp275 is the Proton acceptor of the active site. Mn(2+) contacts are provided by Asn280 and Asp293. O-linked (GlcNAc) threonine glycosylation is present at Thr306. The residue at position 309 (Thr309) is a Phosphothreonine; by PDPK1. O-linked (GlcNAc) threonine glycosylation is present at Thr313. An AGC-kinase C-terminal domain is found at Leu410–Glu481. The residue at position 447 (Ser447) is a Phosphoserine. The residue at position 451 (Thr451) is a Phosphothreonine. 3 positions are modified to phosphoserine: Ser461, Ser474, and Ser478. The O-linked (GlcNAc) serine; alternate glycan is linked to Ser474.

The protein belongs to the protein kinase superfamily. AGC Ser/Thr protein kinase family. RAC subfamily. In terms of assembly, interacts with BTBD10. Interacts with KCTD20. Interacts (via PH domain) with MTCP1, TCL1A and TCL1B; this interaction may facilitate AKT2 oligomerization and phosphorylation, hence increasing kinase activity. Interacts with PHB2; this interaction may be important for myogenic differentiation. Interacts (when phosphorylated) with CLIP3; this interaction promotes cell membrane localization. Interacts with WDFY2 (via WD repeats 1-3). Phosphorylation on Thr-309 and Ser-474 is required for full activity. Phosphorylation of the activation loop at Thr-309 by PDPK1/PDK1 is a prerequisite for full activation. Phosphorylated and activated by PDPK1/PDK1 in the presence of phosphatidylinositol 3,4,5-trisphosphate. Phosphorylation by mTORC2 in response to growth factors plays a key role in AKT1 activation: mTORC2 phosphorylates different sites depending on the context, such as Ser-474 or Ser-478, thereby facilitating subsequent phosphorylation of the activation loop by PDPK1/PDK1. In terms of processing, ubiquitinated; undergoes both 'Lys-48'- and 'Lys-63'-linked polyubiquitination. TRAF6-induced 'Lys-63'-linked AKT2 ubiquitination. When fully phosphorylated and translocated into the nucleus, undergoes 'Lys-48'-polyubiquitination catalyzed by TTC3, leading to its degradation by the proteasome. Post-translationally, O-GlcNAcylation at Thr-306 and Thr-313 inhibits activating phosphorylation at Thr-309 via disrupting the interaction between AKT and PDPK1/PDK1. Expressed in adipocytes and hepatocytes (at protein level). Expressed at low levels in skeletal muscle (at protein level).

Its subcellular location is the cytoplasm. The protein resides in the nucleus. The protein localises to the cell membrane. It is found in the early endosome. The enzyme catalyses L-seryl-[protein] + ATP = O-phospho-L-seryl-[protein] + ADP + H(+). The catalysed reaction is L-threonyl-[protein] + ATP = O-phospho-L-threonyl-[protein] + ADP + H(+). Phosphorylation at Thr-309 (in the kinase domain) and Ser-474 (in the C-terminal regulatory region) is required for full activation. In adipocytes and hepatocytes, the activation is induced by insulin. AKT2 phosphorylation of PKP1 is induced by insulin. Functionally, serine/threonine kinase closely related to AKT1 and AKT3. All 3 enzymes, AKT1, AKT2 and AKT3, are collectively known as AKT kinase. AKT regulates many processes including metabolism, proliferation, cell survival, growth and angiogenesis, through the phosphorylation of a range of downstream substrates. Over 100 substrates have been reported so far, although for most of them, the precise AKT kinase catalyzing the reaction was not specified. AKT regulates glucose uptake by mediating insulin-induced translocation of the SLC2A4/GLUT4 glucose transporter to the cell surface. Phosphorylation of PTPN1 at 'Ser-50' negatively modulates its phosphatase activity preventing dephosphorylation of the insulin receptor and the attenuation of insulin signaling. Phosphorylation of TBC1D4 triggers the binding of this effector to inhibitory 14-3-3 proteins, which is required for insulin-stimulated glucose transport. AKT also regulates the storage of glucose in the form of glycogen by phosphorylating GSK3A at 'Ser-21' and GSK3B at 'Ser-9', resulting in inhibition of its kinase activity. Phosphorylation of GSK3 isoforms by AKT is also thought to be one mechanism by which cell proliferation is driven. AKT also regulates cell survival via the phosphorylation of MAP3K5 (apoptosis signal-related kinase). Phosphorylation of 'Ser-83' decreases MAP3K5 kinase activity stimulated by oxidative stress and thereby prevents apoptosis. AKT mediates insulin-stimulated protein synthesis by phosphorylating TSC2 at 'Ser-939' and 'Thr-1462', thereby activating mTORC1 signaling and leading to both phosphorylation of 4E-BP1 and in activation of RPS6KB1. AKT is involved in the phosphorylation of members of the FOXO factors (Forkhead family of transcription factors), leading to binding of 14-3-3 proteins and cytoplasmic localization. In particular, FOXO1 is phosphorylated at 'Thr-24', 'Ser-256' and 'Ser-319'. FOXO3 and FOXO4 are phosphorylated on equivalent sites. AKT has an important role in the regulation of NF-kappa-B-dependent gene transcription and positively regulates the activity of CREB1 (cyclic AMP (cAMP)-response element binding protein). The phosphorylation of CREB1 induces the binding of accessory proteins that are necessary for the transcription of pro-survival genes such as BCL2 and MCL1. AKT phosphorylates 'Ser-454' on ATP citrate lyase (ACLY), thereby potentially regulating ACLY activity and fatty acid synthesis. Activates the 3B isoform of cyclic nucleotide phosphodiesterase (PDE3B) via phosphorylation of 'Ser-273', resulting in reduced cyclic AMP levels and inhibition of lipolysis. Phosphorylates PIKFYVE on 'Ser-318', which results in increased PI(3)P-5 activity. The Rho GTPase-activating protein DLC1 is another substrate and its phosphorylation is implicated in the regulation cell proliferation and cell growth. AKT plays a role as key modulator of the AKT-mTOR signaling pathway controlling the tempo of the process of newborn neurons integration during adult neurogenesis, including correct neuron positioning, dendritic development and synapse formation. Signals downstream of phosphatidylinositol 3-kinase (PI(3)K) to mediate the effects of various growth factors such as platelet-derived growth factor (PDGF), epidermal growth factor (EGF), insulin and insulin-like growth factor 1 (IGF1). AKT mediates the antiapoptotic effects of IGF1. Essential for the SPATA13-mediated regulation of cell migration and adhesion assembly and disassembly. May be involved in the regulation of the placental development. In response to lysophosphatidic acid stimulation, inhibits the ciliogenesis cascade. In this context, phosphorylates WDR44, hence stabilizing its interaction with Rab11 and preventing the formation of the ciliogenic Rab11-FIP3-RAB3IP complex. Also phosphorylates RAB3IP/Rabin8, thus may affect RAB3IP guanine nucleotide exchange factor (GEF) activity toward Rab8, which is important for cilia growth. Phosphorylates PKP1, facilitating its interaction with YWHAG and translocation to the nucleus, ultimately resulting in a reduction in keratinocyte intercellular adhesion. Phosphorylation of PKP1 increases PKP1 protein stability, translocation to the cytoplasm away from desmosome plaques and PKP1-driven cap-dependent translation. In terms of biological role, several AKT2-specific substrates have been identified, including ANKRD2, C2CD5, CLK2 and PITX2. May play a role in myoblast differentiation. In this context, may act through PITX2 phosphorylation. Unphosphorylated PITX2 associates with an ELAVL1/HuR-containing complex, which stabilizes cyclin mRNA and ensuring cell proliferation. Phosphorylation by AKT2 impairs this association, leading to CCND1 mRNA destabilization and progression towards differentiation. Also involved in the negative regulation of myogenesis in response to stress conditions. In this context, acts by phosphorylating ANKRD2. May also be a key regulator of glucose uptake. Regulates insulin-stimulated glucose transport by the increase of glucose transporter GLUT4 translocation from intracellular stores to the plasma membrane. In this context, acts by phosphorylating C2CD5/CDP138 on 'Ser-197' in insulin-stimulated adipocytes. Through the phosphorylation of CLK2 on 'Thr-343', involved in insulin-regulated suppression of hepatic gluconeogenesis. The sequence is that of RAC-beta serine/threonine-protein kinase from Rattus norvegicus (Rat).